Here is a 194-residue protein sequence, read N- to C-terminus: Orotate phosphoribosyltransferase (194 aa).

Residues Lys-98 and Glu-122–Ser-130 contribute to the 5-phospho-alpha-D-ribose 1-diphosphate site. Orotate is bound by residues Thr-126 and Arg-154.

It belongs to the purine/pyrimidine phosphoribosyltransferase family. PyrE subfamily. Homodimer. Mg(2+) serves as cofactor.

It catalyses the reaction orotidine 5'-phosphate + diphosphate = orotate + 5-phospho-alpha-D-ribose 1-diphosphate. The protein operates within pyrimidine metabolism; UMP biosynthesis via de novo pathway; UMP from orotate: step 1/2. In terms of biological role, catalyzes the transfer of a ribosyl phosphate group from 5-phosphoribose 1-diphosphate to orotate, leading to the formation of orotidine monophosphate (OMP). The chain is Orotate phosphoribosyltransferase from Deinococcus radiodurans (strain ATCC 13939 / DSM 20539 / JCM 16871 / CCUG 27074 / LMG 4051 / NBRC 15346 / NCIMB 9279 / VKM B-1422 / R1).